A 240-amino-acid chain; its full sequence is Rho GDP-dissociation inhibitor 1 (240 aa).

The tract at residues 1-66 is disordered; it reads MSLVSGARDM…DDDSKLQLGP (66 aa).

The protein belongs to the Rho GDI family. As to quaternary structure, interacts with RAC-like GTP binding proteins ARAC5/ROP4 and ARAC3/ROP6.

The protein resides in the cytoplasm. Functionally, regulates the GDP/GTP exchange reaction of the Rho proteins by inhibiting the dissociation of GDP from them, and the subsequent binding of GTP to them. The protein is Rho GDP-dissociation inhibitor 1 (GDI1) of Arabidopsis thaliana (Mouse-ear cress).